We begin with the raw amino-acid sequence, 317 residues long: Ribosomal RNA large subunit methyltransferase F (317 aa).

This sequence belongs to the methyltransferase superfamily. METTL16/RlmF family.

The protein localises to the cytoplasm. The enzyme catalyses adenosine(1618) in 23S rRNA + S-adenosyl-L-methionine = N(6)-methyladenosine(1618) in 23S rRNA + S-adenosyl-L-homocysteine + H(+). Its function is as follows. Specifically methylates the adenine in position 1618 of 23S rRNA. This chain is Ribosomal RNA large subunit methyltransferase F, found in Pseudomonas putida (strain ATCC 700007 / DSM 6899 / JCM 31910 / BCRC 17059 / LMG 24140 / F1).